Here is a 309-residue protein sequence, read N- to C-terminus: Ribonuclease Z (309 aa).

Positions 63, 65, 67, 68, 145, 216, and 274 each coordinate Zn(2+). Catalysis depends on Asp-67, which acts as the Proton acceptor.

The protein belongs to the RNase Z family. Homodimer. The cofactor is Zn(2+).

The catalysed reaction is Endonucleolytic cleavage of RNA, removing extra 3' nucleotides from tRNA precursor, generating 3' termini of tRNAs. A 3'-hydroxy group is left at the tRNA terminus and a 5'-phosphoryl group is left at the trailer molecule.. Functionally, zinc phosphodiesterase, which displays some tRNA 3'-processing endonuclease activity. Probably involved in tRNA maturation, by removing a 3'-trailer from precursor tRNA. The protein is Ribonuclease Z of Streptococcus sanguinis (strain SK36).